A 450-amino-acid polypeptide reads, in one-letter code: MGKYFGTDGVRGEANVELTPELAFKLGRFGGYVLSQHETERPRVFVARDTRISGEMLEAALIAGLLSVGIEVYKLGVLATPGVSYLVRTEKASAGVMISASHNPALDNGIKFFGSDGFKLADEQELEIEALLDAKEDLLPRPSAEGLGALVDYPEGLRKYERFLVTTGADLDGLKIALDTANGAASVSARNVFLDLNADITVIGEKPNGLNINDGIGSTHPEKLQDLVTETASDIGLAFDGDSDRLIAVDENGAIVDGDKIMFIIGKYLSEKGLLAKNTIVTTVMSNLGFHKALDSCGIHKKVTAVGDRYVVEEMRQFGYNLGGEQSGHVIIMDYNTTGDGQLTAVQLTKIMKETGKTLSELASEVTIYPQKLVNIRVDNSMKERAMEVPAIAEVIAQMEGEMAGNGRILVRPSGTEPLLRVMAEAPSNEEVDYYVDTIAAVVRAEIGLD.

The active-site Phosphoserine intermediate is Ser101. Residues Ser101, Asp240, Asp242, and Asp244 each contribute to the Mg(2+) site. Residue Ser101 is modified to Phosphoserine.

The protein belongs to the phosphohexose mutase family. Mg(2+) serves as cofactor. Post-translationally, activated by phosphorylation.

The catalysed reaction is alpha-D-glucosamine 1-phosphate = D-glucosamine 6-phosphate. In terms of biological role, catalyzes the conversion of glucosamine-6-phosphate to glucosamine-1-phosphate. The chain is Phosphoglucosamine mutase from Streptococcus equi subsp. equi (strain 4047).